We begin with the raw amino-acid sequence, 434 residues long: Histidinol dehydrogenase (434 aa).

Residues Ser-242, Gln-264, and His-267 each coordinate substrate. Positions 264 and 267 each coordinate Zn(2+). Residues Glu-332 and His-333 each act as proton acceptor in the active site. Substrate-binding residues include His-333, Asp-366, Glu-420, and His-425. Asp-366 is a Zn(2+) binding site. Residue His-425 participates in Zn(2+) binding.

This sequence belongs to the histidinol dehydrogenase family. Zn(2+) is required as a cofactor.

The enzyme catalyses L-histidinol + 2 NAD(+) + H2O = L-histidine + 2 NADH + 3 H(+). It participates in amino-acid biosynthesis; L-histidine biosynthesis; L-histidine from 5-phospho-alpha-D-ribose 1-diphosphate: step 9/9. Catalyzes the sequential NAD-dependent oxidations of L-histidinol to L-histidinaldehyde and then to L-histidine. The polypeptide is Histidinol dehydrogenase (Desulfotalea psychrophila (strain LSv54 / DSM 12343)).